We begin with the raw amino-acid sequence, 151 residues long: UPF0208 membrane protein CKO_00500 (151 aa).

Helical transmembrane passes span tyrosine 46–leucine 65 and leucine 69–glycine 91.

The protein belongs to the UPF0208 family.

The protein localises to the cell inner membrane. The sequence is that of UPF0208 membrane protein CKO_00500 from Citrobacter koseri (strain ATCC BAA-895 / CDC 4225-83 / SGSC4696).